Here is a 351-residue protein sequence, read N- to C-terminus: Beta-hexosaminidase (351 aa).

Residues D62, R70, R133, and 163–164 (KH) contribute to the substrate site. H176 acts as the Proton donor/acceptor in catalysis. D248 acts as the Nucleophile in catalysis.

This sequence belongs to the glycosyl hydrolase 3 family. NagZ subfamily. Monomer.

The protein resides in the cytoplasm. The enzyme catalyses Hydrolysis of terminal non-reducing N-acetyl-D-hexosamine residues in N-acetyl-beta-D-hexosaminides.. Its pathway is cell wall biogenesis; peptidoglycan recycling. Plays a role in peptidoglycan recycling by cleaving the terminal beta-1,4-linked N-acetylglucosamine (GlcNAc) from peptide-linked peptidoglycan fragments, giving rise to free GlcNAc, anhydro-N-acetylmuramic acid and anhydro-N-acetylmuramic acid-linked peptides. This Haemophilus influenzae (strain ATCC 51907 / DSM 11121 / KW20 / Rd) protein is Beta-hexosaminidase.